We begin with the raw amino-acid sequence, 358 residues long: Probable tartrate dehydrogenase/decarboxylase TtuC' (358 aa).

Residues aspartate 222, aspartate 246, and aspartate 250 each contribute to the Mn(2+) site.

This sequence belongs to the isocitrate and isopropylmalate dehydrogenases family. It depends on Mg(2+) as a cofactor. Mn(2+) is required as a cofactor. Requires K(+) as cofactor.

Its subcellular location is the cytoplasm. The catalysed reaction is tartrate + NAD(+) = 2-hydroxy-3-oxosuccinate + NADH + H(+). The enzyme catalyses (2R,3S)-tartrate + NAD(+) = 2-hydroxy-3-oxosuccinate + NADH + H(+). It carries out the reaction (2R,3R)-tartrate + NAD(+) = 2-hydroxy-3-oxosuccinate + NADH + H(+). It catalyses the reaction (2R,3R)-tartrate + H(+) = (R)-glycerate + CO2. The catalysed reaction is (R)-malate + NAD(+) = pyruvate + CO2 + NADH. It functions in the pathway carbohydrate acid metabolism; tartrate degradation; 2-hydroxy-3-oxosuccinate from L-tartrate: step 1/1. Its pathway is carbohydrate acid metabolism; tartrate degradation; 2-hydroxy-3-oxosuccinate from meso-tartrate: step 1/1. It participates in carbohydrate acid metabolism; tartrate degradation; D-glycerate from L-tartrate: step 1/1. Has multiple catalytic activities. Apart from catalyzing the oxidation of (+)-tartrate to oxaloglycolate, also converts meso-tartrate to D-glycerate and catalyzes the oxidative decarboxylation of D-malate to pyruvate. This Agrobacterium vitis (Rhizobium vitis) protein is Probable tartrate dehydrogenase/decarboxylase TtuC' (ttuC').